Here is a 348-residue protein sequence, read N- to C-terminus: Dihydroorotase (348 aa).

2 residues coordinate Zn(2+): H14 and H16. Substrate-binding positions include 16 to 18 (HLR) and N42. K100, H137, and H175 together coordinate Zn(2+). K100 is modified (N6-carboxylysine). H137 serves as a coordination point for substrate. Position 220 (L220) interacts with substrate. Residue D248 participates in Zn(2+) binding. D248 is a catalytic residue. Positions 252 and 264 each coordinate substrate.

It belongs to the metallo-dependent hydrolases superfamily. DHOase family. Class II DHOase subfamily. In terms of assembly, homodimer. Zn(2+) is required as a cofactor.

It catalyses the reaction (S)-dihydroorotate + H2O = N-carbamoyl-L-aspartate + H(+). Its pathway is pyrimidine metabolism; UMP biosynthesis via de novo pathway; (S)-dihydroorotate from bicarbonate: step 3/3. Functionally, catalyzes the reversible cyclization of carbamoyl aspartate to dihydroorotate. This Pseudomonas putida (strain W619) protein is Dihydroorotase.